Reading from the N-terminus, the 365-residue chain is TD and POZ domain-containing protein 1 (365 aa).

The region spanning 19–149 is the MATH domain; that stretch reads KFCYKWTISN…EDQLTICCKV (131 aa). In terms of domain architecture, BTB spans 188 to 250; it reads TDCCLLVAGH…EMMGFIYTGK (63 aa).

It belongs to the Tdpoz family.

The protein is TD and POZ domain-containing protein 1 of Mus musculus (Mouse).